A 355-amino-acid chain; its full sequence is Molybdenum import ATP-binding protein ModC (355 aa).

Residues 1–233 enclose the ABC transporter domain; it reads MTLIVEAKQR…PSTASDRREA (233 aa). 31–38 serves as a coordination point for ATP; it reads GRSGSGKT. One can recognise a Mop domain in the interval 291–355; it reads GLSALNILEA…AIIKTVALEA (65 aa).

It belongs to the ABC transporter superfamily. Molybdate importer (TC 3.A.1.8) family. As to quaternary structure, the complex is composed of two ATP-binding proteins (ModC), two transmembrane proteins (ModB) and a solute-binding protein (ModA).

The protein localises to the cell inner membrane. The catalysed reaction is molybdate(out) + ATP + H2O = molybdate(in) + ADP + phosphate + H(+). Its function is as follows. Part of the ABC transporter complex ModABC involved in molybdenum import. Responsible for energy coupling to the transport system. The protein is Molybdenum import ATP-binding protein ModC of Rhizobium johnstonii (strain DSM 114642 / LMG 32736 / 3841) (Rhizobium leguminosarum bv. viciae).